Consider the following 96-residue polypeptide: Small ribosomal subunit protein bS16m (96 aa).

Belongs to the bacterial ribosomal protein bS16 family. As to quaternary structure, component of the mitochondrial small ribosomal subunit (mt-SSU). Mature yeast 74S mitochondrial ribosomes consist of a small (37S) and a large (54S) subunit. The 37S small subunit contains a 15S ribosomal RNA (15S mt-rRNA) and at least 32 different proteins. The 54S large subunit contains a 21S rRNA (21S mt-rRNA) and at least 45 different proteins.

It is found in the mitochondrion. Functionally, component of the mitochondrial ribosome (mitoribosome), a dedicated translation machinery responsible for the synthesis of mitochondrial genome-encoded proteins, including at least some of the essential transmembrane subunits of the mitochondrial respiratory chain. The mitoribosomes are attached to the mitochondrial inner membrane and translation products are cotranslationally integrated into the membrane. The polypeptide is Small ribosomal subunit protein bS16m (mrps16) (Schizosaccharomyces pombe (strain 972 / ATCC 24843) (Fission yeast)).